Consider the following 1166-residue polypeptide: MLRMKLPPKSTHPSEPPPDAEEPEADARPGAKAPLRRRRDCRPPPPPTGLPRGPPPPPSPPRGLEPPVASGPTAGAGMPGGGGHAAALREQERVYEWFGLVLGSAQRLEFMCGLLDLCNPLELRFLGSCLEDLARKDYHYLRDSEAKANGLSDPGSLADFREPAVRSRLIVYLALLGSENREAAGRLHRLLPQVDAVLRSLRATRAEGSRGSVEDEPSGDGEQDAEKDGPGPEGSGCAKLGTGGGLGFRAQEELLLLFTMASLHPAFSFHQRVTLREHLERLRSALRVEPEDAEVEPSNFAGSRAQNDSACGDYIQSNETGLVEQAQIPPDGLTVAPHRAQREAVHIEKIMLKGVQRKRADKYWEYTFKVNWSDLSVTTVTKTHQELQEFLLKLPKEFSSESFDKTILKALNQGSLRREERRHPDLEPILRQLFSTSPQAFLQSHKVRSFFRSISSESQHNFNNLQSSLKTSKILEHLKEDSSEASSQEEDVLQHTIIHKKHAGKSPALNVATSCSPLDGLTMQYAEQNGIVDWRNQGCAAIQHSEHCVSSADQHSAEKRSLSSGNKKKGKPQVEKEKVKKTEDRLNSRINGIRLSAPQHVHGSTVKDMNLDIGSGHDTCGETSSESYSSPSSPRHDGRESLESEEEKDRDSDSNSEDSVNPSSARFSGYGSVAQTIAVKPPAETVSLGTEDGNLLEAALTSHKYPHIPFMPTLHCVTHNGAQKSQVVIPSPKSADGKTLGMLVPNAVAISAVMESSNSAPVGILGPAASGESEKHLELLASPLPLPSTFLPHSSAPALQLTLQSLKLQPPQGSSDSCPVSIPPQPTGSLSIGSPNTAFIPVHNPGSFPGSPVATTDPITKSAPQVVGLNQMVPQIEGNTGTVPQPSNVKVVLPAAGLSAAQPPASFPFPGSPQAASALPTQNSSALNAATSAQPASTGISPSQSTVPPAVPTHTPGPAPSPSPALTHSTAQSDSTSYISAVGNTNANGTIVPPQQMGPCGSCGRRCSCGTNGNLQLNSYYYPNPMPGPMYRLPSFFTLPSICNGSYLNQAHQSNGNQLPFFLPQTPYANGLVHDPVMGSQASYGMQQMAGFGRLYPVYPAPNVVANTSGSGPKKNGNVSCYNCGVSGHYAQDCKQSSMEANQQGTYRLRYAPPLPPSNDTLDSAD.

Disordered regions lie at residues 1 to 85 (MLRM…GGHA), 205 to 240 (RAEGSRGSVEDEPSGDGEQDAEKDGPGPEGSGCAKL), 550 to 668 (SSAD…ARFS), and 904 to 982 (PASF…ISAV). The span at 43–64 (PPPPPTGLPRGPPPPPSPPRGL) shows a compositional bias: pro residues. Residues 65-76 (EPPVASGPTAGA) are compositionally biased toward low complexity. The span at 214–223 (EDEPSGDGEQ) shows a compositional bias: acidic residues. Residues 572 to 587 (PQVEKEKVKKTEDRLN) are compositionally biased toward basic and acidic residues. Over residues 624–633 (SSESYSSPSS) the composition is skewed to low complexity. The segment covering 634 to 653 (PRHDGRESLESEEEKDRDSD) has biased composition (basic and acidic residues). Residues 919–947 (LPTQNSSALNAATSAQPASTGISPSQSTV) show a composition bias toward polar residues. The span at 949 to 963 (PAVPTHTPGPAPSPS) shows a compositional bias: pro residues. Residues 964 to 982 (PALTHSTAQSDSTSYISAV) show a composition bias toward polar residues. The segment at 1119-1136 (VSCYNCGVSGHYAQDCKQ) adopts a CCHC-type zinc-finger fold.

The sequence is that of Zinc finger CCHC domain-containing protein 2 (Zcchc2) from Mus musculus (Mouse).